A 967-amino-acid chain; its full sequence is Siderophore exporter MmpL4 (967 aa).

11 helical membrane-spanning segments follow: residues 26-46 (AFAV…TVFV), 210-230 (VIFI…LLLI), 242-262 (VVAV…VSLL), 303-323 (AHVI…LSFA), 333-353 (IPCA…GPAV), 384-404 (WPLP…LALP), 769-789 (WDLL…MLII), 793-813 (FIAA…SFGL), 821-841 (ILAI…LLAV), 875-895 (VVTN…VSDL), and 913-934 (TLIV…WFWW). The disordered stretch occupies residues 943–967 (ARTPTVPSETQPAGRPLAMSSDRLG).

Belongs to the resistance-nodulation-cell division (RND) (TC 2.A.6) family. MmpL subfamily. As to quaternary structure, interacts with MmpS4.

It is found in the cell inner membrane. Functionally, part of an export system, which is required for biosynthesis and secretion of siderophores. This Mycobacterium tuberculosis (strain CDC 1551 / Oshkosh) protein is Siderophore exporter MmpL4 (mmpL4).